The following is a 237-amino-acid chain: MSVISMKQLLEAGVHFGHQTRRWNPKMAKYIFTERNGIYIIDLQKTVKKVEEAYKFTKEVAETGKPILFVGTKKQAQDAIKDEAERCGMYFVNERWLGGMLTNHKTIKTRINKLRELEKMEEEGVFNVLPKKEVIKLRAEKEKLEKYLGGIKDMPELPGAMFVVDPRKENIAIQEAHRLGIPVVGIVDTNCDPEQLDFAIPGNDDAIRAVKLITGAMATAVIEGRQGAEEEVAEDQE.

Belongs to the universal ribosomal protein uS2 family.

The protein is Small ribosomal subunit protein uS2 of Clostridioides difficile (strain 630) (Peptoclostridium difficile).